Here is a 345-residue protein sequence, read N- to C-terminus: S-adenosylmethionine:tRNA ribosyltransferase-isomerase (345 aa).

Belongs to the QueA family. In terms of assembly, monomer.

The protein resides in the cytoplasm. The enzyme catalyses 7-aminomethyl-7-carbaguanosine(34) in tRNA + S-adenosyl-L-methionine = epoxyqueuosine(34) in tRNA + adenine + L-methionine + 2 H(+). It participates in tRNA modification; tRNA-queuosine biosynthesis. Transfers and isomerizes the ribose moiety from AdoMet to the 7-aminomethyl group of 7-deazaguanine (preQ1-tRNA) to give epoxyqueuosine (oQ-tRNA). The polypeptide is S-adenosylmethionine:tRNA ribosyltransferase-isomerase (Thermodesulfovibrio yellowstonii (strain ATCC 51303 / DSM 11347 / YP87)).